A 372-amino-acid chain; its full sequence is Aminomethyltransferase (372 aa).

This sequence belongs to the GcvT family. In terms of assembly, the glycine cleavage system is composed of four proteins: P, T, L and H.

The catalysed reaction is N(6)-[(R)-S(8)-aminomethyldihydrolipoyl]-L-lysyl-[protein] + (6S)-5,6,7,8-tetrahydrofolate = N(6)-[(R)-dihydrolipoyl]-L-lysyl-[protein] + (6R)-5,10-methylene-5,6,7,8-tetrahydrofolate + NH4(+). Functionally, the glycine cleavage system catalyzes the degradation of glycine. This Synechococcus elongatus (strain ATCC 33912 / PCC 7942 / FACHB-805) (Anacystis nidulans R2) protein is Aminomethyltransferase.